The following is a 286-amino-acid chain: Probable transport system permease protein NifC (286 aa).

6 consecutive transmembrane segments (helical) span residues 34–54 (LFLALTAIYFVMLIFPIISMI), 75–95 (IILSFVTSLIALIFTFIIGTP), 114–134 (IFVEIPVVLPPAVAGIALLLA), 152–172 (VIFTSTAVIIAQFFVSSALYV), 216–236 (GLILAWIRSLGEFGATLMFAG), and 257–277 (IKMATAFATILYIMTFVLLLL). Residues 75 to 278 (IILSFVTSLI…IMTFVLLLLV (204 aa)) enclose the ABC transmembrane type-1 domain.

This sequence belongs to the binding-protein-dependent transport system permease family. CysTW subfamily.

Its subcellular location is the cell membrane. Functionally, may be involved in molybdenum transport. The protein is Probable transport system permease protein NifC (nifC) of Clostridium pasteurianum.